A 184-amino-acid polypeptide reads, in one-letter code: C-phycoerythrin class 1 subunit beta (184 aa).

Residues Cys50 and Cys61 each contribute to the (2R,3E)-phycoerythrobilin site. Asn72 is modified (N4-methylasparagine). The (2R,3E)-phycoerythrobilin site is built by Cys82 and Cys165.

The protein belongs to the phycobiliprotein family. As to quaternary structure, heterodimer of an alpha and a beta chain. In terms of processing, contains three covalently linked bilin chromophores.

It is found in the cellular thylakoid membrane. Functionally, light-harvesting photosynthetic bile pigment-protein from the phycobiliprotein complex. In Synechococcus sp. (strain WH7803), this protein is C-phycoerythrin class 1 subunit beta (cpeB).